A 197-amino-acid chain; its full sequence is Alkyl hydroperoxide reductase C (197 aa).

Residues 2–163 form the Thioredoxin domain; that stretch reads VLVTQNAPNF…MIRMVDALDF (162 aa). The Cysteine sulfenic acid (-SOH) intermediate role is filled by Cys50.

It belongs to the peroxiredoxin family. AhpC/Prx1 subfamily. As to quaternary structure, homodimer; disulfide-linked, upon oxidation. 5 homodimers assemble to form a ring-like decamer.

It is found in the cytoplasm. It carries out the reaction a hydroperoxide + NADH + H(+) = an alcohol + NAD(+) + H2O. Functionally, thiol-specific peroxidase that catalyzes the reduction of hydrogen peroxide and organic hydroperoxides to water and alcohols, respectively. Plays a role in cell protection against oxidative stress by detoxifying peroxides. The protein is Alkyl hydroperoxide reductase C of Buchnera aphidicola subsp. Acyrthosiphon pisum (strain APS) (Acyrthosiphon pisum symbiotic bacterium).